The sequence spans 212 residues: Suppressor of cytokine signaling 1 (212 aa).

Residues 1–55 (MVARNQVAADNAISPAAEPRRRSEPSSSSSSSSPAAPVRPRPCPAVPAPAPGDTH) are disordered. Positions 25–36 (PSSSSSSSSPAA) are enriched in low complexity. Residues 37-50 (PVRPRPCPAVPAPA) are compositionally biased toward pro residues. Positions 56-67 (FRTFRSHSDYRR) are kinase inhibitory region (KIR). An extended SH2 subdomain (ESS) region spans residues 68-79 (ITRTSALLDACG). Positions 80–175 (FYWGPLSVHG…PLRQRRVRPL (96 aa)) constitute an SH2 domain. Residues 162–211 (MLGAPLRQRRVRPLQELCRQRIVAAVGRENLARIPLNPVLRDYLSSFPFQ) enclose the SOCS box domain. The tract at residues 174–183 (PLQELCRQRI) is interaction with Elongin BC complex.

This sequence belongs to the SOCS1 family. As to quaternary structure, interacts with multiple activated proteins of the tyrosine kinase signaling pathway including JAK family kinases, TEC, KIT, GRB2 and VAV. Binding to JAKs is mediated through the KIR and SH2 domain to a phosphorylated tyrosine residue within the JAK JH1 domain. Binds the SH3 domain of GRB2 via diproline determinants in the N-terminus, and the N-terminal regulatory domain of VAV. Interacts with the Elongin BC complex (ELOB and ELOC). Component of an ECS CBC(SOCS1) E3 ubiquitin-protein ligase complex which contains Elongin BC, CUL5, RBX1 and SOCS1. Interacts (via SH2 domain and SOCS box) with TRIM8. Interacts with CUL2. Interacts with AXL and FGFR3. Interacts with INSR. Interacts with TRIM8. Interacts with DCUN1D1. Interacts with IFNGR1. In terms of tissue distribution, high expression in thymus. Lower expression in lung and spleen. Expressed in both Th1 and Th2 cells.

It is found in the nucleus. The protein resides in the cytoplasmic vesicle. Its pathway is protein modification; protein ubiquitination. Functionally, essential negative regulator of type I and type II interferon (IFN) signaling, as well as that of other cytokines, including IL2, IL4, IL6 and leukemia inhibitory factor (LIF). Downregulates cytokine signaling by inhibiting the JAK/STAT signaling pathway. Acts by binding to JAK proteins and to IFNGR1 and inhibiting their kinase activity. In vitro, suppresses Tec protein-tyrosine activity. Regulates IFN-gamma (IFNG)-mediated sensory neuron survival. Probable substrate recognition component of an ECS (Elongin BC-CUL2/5-SOCS-box protein) E3 ubiquitin ligase complex which mediates the ubiquitination and subsequent proteasomal degradation of target proteins. The protein is Suppressor of cytokine signaling 1 of Mus musculus (Mouse).